We begin with the raw amino-acid sequence, 99 residues long: Large ribosomal subunit protein uL23 (99 aa).

It belongs to the universal ribosomal protein uL23 family. In terms of assembly, part of the 50S ribosomal subunit. Contacts protein L29, and trigger factor when it is bound to the ribosome.

In terms of biological role, one of the early assembly proteins it binds 23S rRNA. One of the proteins that surrounds the polypeptide exit tunnel on the outside of the ribosome. Forms the main docking site for trigger factor binding to the ribosome. This Xanthomonas campestris pv. campestris (strain B100) protein is Large ribosomal subunit protein uL23.